We begin with the raw amino-acid sequence, 266 residues long: Large ribosomal subunit protein uL2c (266 aa).

Positions Met-1–Ser-24 are disordered. Over residues Lys-7–Ser-24 the composition is skewed to polar residues.

This sequence belongs to the universal ribosomal protein uL2 family. Part of the 50S ribosomal subunit.

It is found in the plastid. It localises to the chloroplast. In Nicotiana debneyi (Debney's tobacco), this protein is Large ribosomal subunit protein uL2c (rpl2).